The primary structure comprises 144 residues: Large ribosomal subunit protein uL15 (144 aa).

Positions 1–57 (MELNNLKPAEGAKHAKRRVGRGIGSGLGKTAGRGHKGQKSRSGGFHKVGFEGGQMPL) are disordered. Residues 21–31 (RGIGSGLGKTA) are compositionally biased toward gly residues.

The protein belongs to the universal ribosomal protein uL15 family. In terms of assembly, part of the 50S ribosomal subunit.

Binds to the 23S rRNA. This Paraburkholderia xenovorans (strain LB400) protein is Large ribosomal subunit protein uL15.